A 156-amino-acid chain; its full sequence is Small ribosomal subunit protein uS7 (156 aa).

This sequence belongs to the universal ribosomal protein uS7 family. As to quaternary structure, part of the 30S ribosomal subunit. Contacts proteins S9 and S11.

In terms of biological role, one of the primary rRNA binding proteins, it binds directly to 16S rRNA where it nucleates assembly of the head domain of the 30S subunit. Is located at the subunit interface close to the decoding center, probably blocks exit of the E-site tRNA. This is Small ribosomal subunit protein uS7 from Rhodococcus erythropolis (strain PR4 / NBRC 100887).